Consider the following 578-residue polypeptide: Zinc finger protein with KRAB and SCAN domains 8 (578 aa).

The segment at 1–20 (MAEESRKPSAPSPPDQTPEE) is disordered. S12 is modified (phosphoserine). A Glycyl lysine isopeptide (Lys-Gly) (interchain with G-Cter in SUMO2) cross-link involves residue K26. The SCAN box domain maps to 51-133 (RLRFRQLRYQ…TLLEDLERQI (83 aa)). Residues 158–205 (ASAPEPPNTQLQSEATQHKSPVPQESQERAMSTSQSPTRSQKGSSGDQ) form a disordered region. The segment covering 165 to 205 (NTQLQSEATQHKSPVPQESQERAMSTSQSPTRSQKGSSGDQ) has biased composition (polar residues). Residues K176 and K199 each participate in a glycyl lysine isopeptide (Lys-Gly) (interchain with G-Cter in SUMO2) cross-link. S201 carries the post-translational modification Phosphoserine. The region spanning 220–316 (EKIEDMAVSL…GRLERQRGNP (97 aa)) is the KRAB domain. Glycyl lysine isopeptide (Lys-Gly) (interchain with G-Cter in SUMO2) cross-links involve residues K221, K272, and K288. 2 consecutive C2H2-type zinc fingers follow at residues 322–344 (HKCD…WRIH) and 350–372 (YQCN…QDIH). Residues K374 and K376 each participate in a glycyl lysine isopeptide (Lys-Gly) (interchain with G-Cter in SUMO2) cross-link. C2H2-type zinc fingers lie at residues 378–400 (YHCK…QRIH), 406–428 (YQCN…QRIH), 434–456 (YECN…QRIH), 462–484 (YECD…QRSH), 490–512 (YKCN…QRIH), 518–540 (YKCK…LRIH), and 546–568 (YQCN…QRIH). Residues K413 and K441 each participate in a glycyl lysine isopeptide (Lys-Gly) (interchain with G-Cter in SUMO2) cross-link. K502 participates in a covalent cross-link: Glycyl lysine isopeptide (Lys-Gly) (interchain with G-Cter in SUMO2). Residue K572 forms a Glycyl lysine isopeptide (Lys-Gly) (interchain with G-Cter in SUMO2) linkage.

It belongs to the krueppel C2H2-type zinc-finger protein family.

It localises to the nucleus. In terms of biological role, may be involved in transcriptional regulation. This Homo sapiens (Human) protein is Zinc finger protein with KRAB and SCAN domains 8 (ZKSCAN8).